Here is a 95-residue protein sequence, read N- to C-terminus: Histone-like DNA-binding protein (95 aa).

This sequence belongs to the bacterial histone-like protein family.

This chain is Histone-like DNA-binding protein, found in Rickettsia rickettsii.